The sequence spans 635 residues: Threonine--tRNA ligase (635 aa).

The 61-residue stretch at 1-61 (MIKITLKDGS…KEDAALELLT (61 aa)) folds into the TGS domain. The catalytic stretch occupies residues 242-532 (DHRKLGQELD…LTEHFAGAFP (291 aa)). 3 residues coordinate Zn(2+): C333, H384, and H509.

Belongs to the class-II aminoacyl-tRNA synthetase family. In terms of assembly, homodimer. Zn(2+) is required as a cofactor.

The protein resides in the cytoplasm. It carries out the reaction tRNA(Thr) + L-threonine + ATP = L-threonyl-tRNA(Thr) + AMP + diphosphate + H(+). In terms of biological role, catalyzes the attachment of threonine to tRNA(Thr) in a two-step reaction: L-threonine is first activated by ATP to form Thr-AMP and then transferred to the acceptor end of tRNA(Thr). Also edits incorrectly charged L-seryl-tRNA(Thr). The polypeptide is Threonine--tRNA ligase (Desulforamulus reducens (strain ATCC BAA-1160 / DSM 100696 / MI-1) (Desulfotomaculum reducens)).